A 90-amino-acid polypeptide reads, in one-letter code: Serine protease inhibitor kazal-like protein, minor form (90 aa).

The N-terminal stretch at methionine 1–serine 23 is a signal peptide. The region spanning valine 33–tyrosine 89 is the Kazal-like domain. Residue asparagine 38 is glycosylated (N-linked (GlcNAc...) asparagine).

Luminal fluid and mucosal folds of the seminal vesicles (at protein level). Not detected in brain, heart, lung, liver, kidney, stomach, small intestine, muscle, skin, thymus, placenta or bladder.

It is found in the secreted. Its function is as follows. Does not function as an inhibitor of trypsin, chymotrypsin, subtilisin or elastase. Binds sperm and enhances sperm motility. May act as a decapacitation factor, suppresses BSA-stimulated sperm capacitation and blocks sperm-oocyte interactions in vitro. The sequence is that of Serine protease inhibitor kazal-like protein, minor form (Spinkl) from Mus musculus (Mouse).